We begin with the raw amino-acid sequence, 539 residues long: MRAVLLVCLLAGLAHADLFTAIADLQHMLGAEKDVTTIIDQYIEAERARLDDLRRYAHEYVHRNAHAESVGPEFVTNPINAYLLIKRLTTEWKKVENIMLNNKASTFLKNITDNRVRSEVKFPGEEDLSGAATALLRLQDTYSLDTLDLSNGIIGGEKVSNKLSGHDTFEVGRSAYNQKDYYHCLMWMQVALVKIENENPPTIEEWEILEYLAYSLYQQGNVRRALSLTKRLAKIAPNHPRAKGNVKWYEDMLQGKDMVGDLPPIVNKRVEYDGIVERDAYEALCRGEIPPVEPKWKNKLRCYLKRDKPFLKLAPIKVEILRFDPLAVLFKNVIHDSEIEVIKELASPKLKRATVQNSKTGELEHATYRISKSAWLKGDLDPVIDRVNRRIEDFTNLNQATSEELQVANYGLGGHYDPHFDFARKEEKNAFKTLNTGNRIATVLFYMSQPERGGATVFNHLGTAVFPSKNDALFWYNLRRDGEGDLRTRHAACPVLLGVKWVSNKWIHEKGQEFTRPCGLEEEVQENFIGDLSPYANDP.

Residues 1–16 (MRAVLLVCLLAGLAHA) form the signal peptide. Asn-110 carries an N-linked (GlcNAc...) asparagine glycan. The Fe2OG dioxygenase domain maps to 401–509 (TSEELQVANY…KWVSNKWIHE (109 aa)). The Fe cation site is built by His-419, Asp-421, and His-490. Lys-500 is a binding site for 2-oxoglutarate.

The protein belongs to the P4HA family. As to quaternary structure, heterotetramer of two alpha chains and two beta chains. Exist either as a phy-2(2)/pdi-2(2) tetramer or as a phy-1/phy-2/pdi-2(2) tetramer. Requires Fe(2+) as cofactor. It depends on L-ascorbate as a cofactor.

It is found in the endoplasmic reticulum lumen. The catalysed reaction is L-prolyl-[collagen] + 2-oxoglutarate + O2 = trans-4-hydroxy-L-prolyl-[collagen] + succinate + CO2. Catalyzes the post-translational formation of 4-hydroxyproline in -Xaa-Pro-Gly- sequences in collagens and other proteins. The chain is Prolyl 4-hydroxylase subunit alpha-2 (phy-2) from Caenorhabditis elegans.